The primary structure comprises 375 residues: Paralyzed arrest at two-fold protein 6 (375 aa).

A disordered region spans residues 1–51 (MSTLGRSKTPSRDEPKKPGVFEKLSGTLSRKKKAPEDEHGNQGGAHHATDE). Residues 10-20 (PSRDEPKKPGV) show a composition bias toward basic and acidic residues. 2 Calponin-homology (CH) domains span residues 99 to 206 (AQVV…LHYR) and 266 to 373 (AHVK…TKYK).

This sequence belongs to the parvin family. May interact (via calponin-homology (CH) 2 domain) with pat-4 (via kinase domain). May form a complex with unc-112 and pat-4. Component of an integrin containing attachment complex, composed of at least pat-2, pat-3, pat-4, pat-6, unc-52, unc-97 and unc-112. As to expression, expressed from 1.5 stage embryos, mostly within the muscle cells. In adult hermaphrodites, expressed in the attachments of other muscles, including the uterine, anal depressor, anal sphincter, and vulval muscles, as well as in the spermatheca and the distal tip cells. Expressed in mechanosensory receptor neurons ALML/R, PLML/R, AVM, and PVM. Localizes at body wall muscle attachments.

Its subcellular location is the cytoplasm. It is found in the cytoskeleton. It localises to the myofibril. The protein resides in the sarcomere. The protein localises to the m line. Its subcellular location is the perikaryon. It is found in the cell projection. It localises to the axon. In terms of biological role, involved in the regulation of cell adhesion and cytoskeleton organization. Component of an integrin containing attachment complex, which is required for muscle development and maintenance. During embryonic development, required to recruit cpna-1, unc-89 and myofilaments to newly forming integrin attachments composed of integrins pat-2/pat-3, pat-4 and unc-112. Also required to reposition the integrin-based attachments so that they form the highly ordered array of dense body and M-line attachments that are characteristic of mature muscle cells. During the formation of neuromuscular junctions at the larval stage, negatively regulates membrane protrusion from body wall muscles. This chain is Paralyzed arrest at two-fold protein 6, found in Caenorhabditis elegans.